A 286-amino-acid chain; its full sequence is Eukaryotic translation initiation factor 3 subunit J (286 aa).

3 disordered regions span residues 1–35 (MSWD…DSWD), 141–162 (AASG…HPLF), and 229–258 (KAER…AVKT). The span at 21–35 (WEEEGNDEPLLDSWD) shows a compositional bias: acidic residues. Residues 35–75 (DIDEEEVARKKKEEEAKKKAEKEALKKKQEESKAKKLSKNK) adopt a coiled-coil conformation.

It belongs to the eIF-3 subunit J family. In terms of assembly, component of the eukaryotic translation initiation factor 3 (eIF-3) complex.

The protein localises to the cytoplasm. Functionally, component of the eukaryotic translation initiation factor 3 (eIF-3) complex, which is involved in protein synthesis of a specialized repertoire of mRNAs and, together with other initiation factors, stimulates binding of mRNA and methionyl-tRNAi to the 40S ribosome. The eIF-3 complex specifically targets and initiates translation of a subset of mRNAs involved in cell proliferation. This chain is Eukaryotic translation initiation factor 3 subunit J, found in Debaryomyces hansenii (strain ATCC 36239 / CBS 767 / BCRC 21394 / JCM 1990 / NBRC 0083 / IGC 2968) (Yeast).